Reading from the N-terminus, the 154-residue chain is Large ribosomal subunit protein uL13 (154 aa).

This sequence belongs to the universal ribosomal protein uL13 family. As to quaternary structure, part of the 50S ribosomal subunit.

In terms of biological role, this protein is one of the early assembly proteins of the 50S ribosomal subunit, although it is not seen to bind rRNA by itself. It is important during the early stages of 50S assembly. The chain is Large ribosomal subunit protein uL13 from Bradyrhizobium diazoefficiens (strain JCM 10833 / BCRC 13528 / IAM 13628 / NBRC 14792 / USDA 110).